The primary structure comprises 73 residues: uncharacterized protein (73 aa).

This is an uncharacterized protein from Saccharomyces cerevisiae (strain ATCC 204508 / S288c) (Baker's yeast).